The primary structure comprises 127 residues: MWMGLIQLVEGVKRKDQGFLEKEFYHKTNIKMRCEFLACWPAFTVLGEAWRDQVDWSRLLRDAGLVKMSRKPRASSPLSNNHPPTPKRRGSGRHPLNPGPEALSKFPRQPGREKGPIKEVPGTKGSP.

A disordered region spans residues 68–127 (MSRKPRASSPLSNNHPPTPKRRGSGRHPLNPGPEALSKFPRQPGREKGPIKEVPGTKGSP).

In terms of tissue distribution, weakly expressed in kidney. Expressed in various tumor cell lines including carcinomas, myeloid and lymphoid malignancies, melanomas and prostate cancer. Overexpressed in taxol-resistant breast cancer line MDA 435TR and the doxorubicin-resistant multiple myelanoma lines RPMI-8226/Dox40 and RPMI-8226/MDR10V.

In terms of biological role, drug-resistance related protein, its expression is associated with the chemotherapy resistant and neoplastic phenotype. May also be linked to the malignant phenotype. This is Chondrosarcoma-associated gene 2/3 protein (CSAG2) from Homo sapiens (Human).